The sequence spans 498 residues: ATP synthase subunit beta, chloroplastic (498 aa).

172 to 179 (GGAGVGKT) is a binding site for ATP.

The protein belongs to the ATPase alpha/beta chains family. F-type ATPases have 2 components, CF(1) - the catalytic core - and CF(0) - the membrane proton channel. CF(1) has five subunits: alpha(3), beta(3), gamma(1), delta(1), epsilon(1). CF(0) has four main subunits: a(1), b(1), b'(1) and c(9-12).

It is found in the plastid. It localises to the chloroplast thylakoid membrane. It carries out the reaction ATP + H2O + 4 H(+)(in) = ADP + phosphate + 5 H(+)(out). Its function is as follows. Produces ATP from ADP in the presence of a proton gradient across the membrane. The catalytic sites are hosted primarily by the beta subunits. This is ATP synthase subunit beta, chloroplastic from Daucus carota (Wild carrot).